The primary structure comprises 1447 residues: DNA topoisomerase 2 (1447 aa).

Residues Asn72, Asn101, 129–131, and 142–149 each bind ATP; these read SSN and GRNGYGAK. The tract at residues 323–325 is interaction with DNA; that stretch reads KKK. 357–359 lines the ATP pocket; that stretch reads QTK. The 118-residue stretch at 435–552 folds into the Toprim domain; that stretch reads CTLILTEGDS…ELLRLPFLEE (118 aa). Mg(2+) is bound by residues Glu441, Asp521, and Asp523. The Topo IIA-type catalytic domain maps to 695 to 1169; it reads IPSLVDGLKP…TPEMLWLDDL (475 aa). Tyr785 (O-(5'-phospho-DNA)-tyrosine intermediate) is an active-site residue. Residues 972-981 are interaction with DNA; it reads KLTTTLSTNQ. Disordered stretches follow at residues 1079–1110, 1183–1231, and 1246–1447; these read EDAEQADEEDEEEEEAAPSVSSKAKKEKEVDP, ERAE…DGEP, and AAAK…DFNC. Acidic residues predominate over residues 1081–1094; the sequence is AEQADEEDEEEEEA. Over residues 1255–1281 the composition is skewed to basic and acidic residues; that stretch reads KEPKKPKEPKEPKVKKEPKGKQIKAEP. The segment covering 1283-1293 has biased composition (acidic residues); it reads ASGDEVDEFDA. Residue Ser1284 is modified to Phosphoserine. 2 stretches are compositionally biased toward basic and acidic residues: residues 1310 to 1325 and 1332 to 1359; these read VKKEPGEKKPRQKKEN and SKIDFSKAKAKKSDDDVEEVTPRAERPG. Ser1344 is subject to Phosphoserine. Thr1352 is modified (phosphothreonine). Phosphoserine is present on residues Ser1374, Ser1385, Ser1392, and Ser1396. The span at 1374 to 1394 shows a compositional bias: acidic residues; the sequence is SDEEEDGGNVGSDDDGNASDD. Residues 1395 to 1408 show a composition bias toward basic and acidic residues; sequence DSPKRPAKRGREDE. The span at 1413–1423 shows a compositional bias: basic residues; sequence AKKKAPPKKRR. Positions 1427–1447 are enriched in acidic residues; sequence ESDDDDIEIDEDDDDDSDFNC.

It belongs to the type II topoisomerase family. As to quaternary structure, homodimer. Interacts with mod(mdg4). Interacts with barr. Interacts with ph-p. Interacts with mle; the interaction mediates association with the MSL dosage compensation complex. Requires Mg(2+) as cofactor. Mn(2+) serves as cofactor. The cofactor is Ca(2+). Post-translationally, phosphorylated. Phosphorylation by casein kinase II enhances ATPase activity.

Its subcellular location is the nucleus. It localises to the chromosome. It is found in the cytoplasm. The catalysed reaction is ATP-dependent breakage, passage and rejoining of double-stranded DNA.. Its function is as follows. Control of topological states of DNA by transient breakage and subsequent rejoining of DNA strands. Topoisomerase II makes double-strand breaks. Essential during mitosis and meiosis for proper segregation of daughter chromosomes. During meiosis, it disrupts heterochromatic connections between achiasmate and chiasmate homologs after spindle assembly so that chromosomes can separate at prometaphase I. During mitosis, it functions in the separation of sister chromatids by establishing amphitelic kinetochore attachments in mitotic spindles. May have a role in chromatin condensation and chromosome structure. May be involved in X-chromosome dosage compensation, perhaps by modifying the topological state of compensated genes. Regulates activity of the gypsy chromatin insulator complex by binding to mod(mdg4) and preventing its degradation. This is DNA topoisomerase 2 from Drosophila melanogaster (Fruit fly).